We begin with the raw amino-acid sequence, 447 residues long: tRNA(Ile)-lysidine synthase (447 aa).

Position 31-36 (31-36 (SGGMDS)) interacts with ATP.

It belongs to the tRNA(Ile)-lysidine synthase family.

The protein resides in the cytoplasm. The catalysed reaction is cytidine(34) in tRNA(Ile2) + L-lysine + ATP = lysidine(34) in tRNA(Ile2) + AMP + diphosphate + H(+). In terms of biological role, ligates lysine onto the cytidine present at position 34 of the AUA codon-specific tRNA(Ile) that contains the anticodon CAU, in an ATP-dependent manner. Cytidine is converted to lysidine, thus changing the amino acid specificity of the tRNA from methionine to isoleucine. The sequence is that of tRNA(Ile)-lysidine synthase from Pseudothermotoga lettingae (strain ATCC BAA-301 / DSM 14385 / NBRC 107922 / TMO) (Thermotoga lettingae).